We begin with the raw amino-acid sequence, 971 residues long: Kinesin-like protein KIN-14C (971 aa).

Positions 14 to 119 (ANRRAEVIDW…CLLALKDNVA (106 aa)) constitute a Calponin-homology (CH) domain. Residues 272–357 (IKALETLVNG…QMETKARQME (86 aa)) are a coiled coil. The Kinesin motor domain maps to 472–799 (NIRVYCRVRP…LKFAERVSGV (328 aa)). 556–563 (GQTGSGKT) lines the ATP pocket. A coiled-coil region spans residues 809–844 (EGKDIKELLEQVASLKDTIARKDMEIEQLQLLKSKS). Residues 839–881 (LLKSKSPNSMTDRNGSNLLRQSTSSTGLSSLPVASQQNQQLSG) show a composition bias toward polar residues. A disordered region spans residues 839–971 (LLKSKSPNSM…GSLAKPSKRR (133 aa)).

The protein belongs to the TRAFAC class myosin-kinesin ATPase superfamily. Kinesin family. KIN-14 subfamily.

In Oryza sativa subsp. japonica (Rice), this protein is Kinesin-like protein KIN-14C.